The primary structure comprises 109 residues: uncharacterized protein (109 aa).

The tract at residues 63–109 (DPSTWEPEEHETEHCRGHTLPEKKQKPQGGHGSDKDEDKGNCGCDHC) is disordered. Composition is skewed to basic and acidic residues over residues 73-87 (ETEHCRGHTLPEKKQ) and 94-109 (GSDKDEDKGNCGCDHC).

This is an uncharacterized protein from Caenorhabditis elegans.